The primary structure comprises 172 residues: Peptide deformylase (172 aa).

Fe cation is bound by residues cysteine 92 and histidine 134. Residue glutamate 135 is part of the active site. A Fe cation-binding site is contributed by histidine 138.

It belongs to the polypeptide deformylase family. It depends on Fe(2+) as a cofactor.

The enzyme catalyses N-terminal N-formyl-L-methionyl-[peptide] + H2O = N-terminal L-methionyl-[peptide] + formate. Removes the formyl group from the N-terminal Met of newly synthesized proteins. Requires at least a dipeptide for an efficient rate of reaction. N-terminal L-methionine is a prerequisite for activity but the enzyme has broad specificity at other positions. The sequence is that of Peptide deformylase from Saccharophagus degradans (strain 2-40 / ATCC 43961 / DSM 17024).